A 205-amino-acid chain; its full sequence is Protein N-terminal glutamine amidohydrolase (205 aa).

Active-site residues include Cys20, His74, and Asp90.

This sequence belongs to the NTAQ1 family. Monomer.

It carries out the reaction N-terminal L-glutaminyl-[protein] + H2O = N-terminal L-glutamyl-[protein] + NH4(+). Functionally, mediates the side-chain deamidation of N-terminal glutamine residues to glutamate, an important step in N-end rule pathway of protein degradation. Conversion of the resulting N-terminal glutamine to glutamate renders the protein susceptible to arginylation, polyubiquitination and degradation as specified by the N-end rule. Does not act on substrates with internal or C-terminal glutamine and does not act on non-glutamine residues in any position. The chain is Protein N-terminal glutamine amidohydrolase (tun) from Drosophila grimshawi (Hawaiian fruit fly).